A 513-amino-acid polypeptide reads, in one-letter code: Probable E3 ubiquitin-protein ligase XBOS34 (513 aa).

ANK repeat units lie at residues 39–69 (EGKTPLMVASMRPDLINVVQVLIELGANVNA), 75–104 (YCGTALHHAAKKGLEQTVHLLLSHGANPFI), and 108–137 (DCHTALDLAREKGHVNVVRAIEGRISLFCG). Composition is skewed to polar residues over residues 309–327 (ITTTTATNDWGNPPSNSLN) and 335–355 (SAPSKTSGQVPVVTSSSSTYN). Disordered stretches follow at residues 309–378 (ITTT…QNST) and 423–455 (SADGGTAVSSAKPAENEGDAKPAESDANASNSG). Positions 361 to 378 (GTSSGQSSSKHNKSQNST) are enriched in low complexity. The span at 436–446 (AENEGDAKPAE) shows a compositional bias: basic and acidic residues. The RING-type zinc finger occupies 462–501 (CVICLDAPVEGACIPCGHMAGCMSCLKDIESKKWGCPICR).

It catalyses the reaction S-ubiquitinyl-[E2 ubiquitin-conjugating enzyme]-L-cysteine + [acceptor protein]-L-lysine = [E2 ubiquitin-conjugating enzyme]-L-cysteine + N(6)-ubiquitinyl-[acceptor protein]-L-lysine.. Its pathway is protein modification; protein ubiquitination. This is Probable E3 ubiquitin-protein ligase XBOS34 (XBOS34) from Oryza sativa subsp. japonica (Rice).